The chain runs to 416 residues: Antigen EG13 (416 aa).

The F-BAR domain occupies 1–247; that stretch reads MIQERADIEK…TVAKVDADAD (247 aa). The segment at 297-327 is disordered; the sequence is LKTFTSPDRGGPIPGTTDSGSNISTSPVHTT. Over residues 312–327 the composition is skewed to polar residues; it reads TTDSGSNISTSPVHTT. Residues 361–416 enclose the SH3 domain; it reads RPGVPIRALYDYVGVEADELSFNSGDLFEKLEDEDEQGWCKGRKDGRVGLYPRQLR.

This chain is Antigen EG13 (EG13), found in Echinococcus granulosus (Hydatid tapeworm).